Consider the following 193-residue polypeptide: Acyl carrier protein phosphodiesterase (193 aa).

The protein belongs to the AcpH family.

It catalyses the reaction holo-[ACP] + H2O = apo-[ACP] + (R)-4'-phosphopantetheine + H(+). Its function is as follows. Converts holo-ACP to apo-ACP by hydrolytic cleavage of the phosphopantetheine prosthetic group from ACP. The sequence is that of Acyl carrier protein phosphodiesterase from Escherichia coli O127:H6 (strain E2348/69 / EPEC).